The chain runs to 281 residues: Pantothenate synthetase (281 aa).

30–37 (MGNLHQGH) contacts ATP. Residue His37 is the Proton donor of the active site. (R)-pantoate is bound at residue Gln61. Gln61 lines the beta-alanine pocket. 149 to 152 (GNKD) serves as a coordination point for ATP. Gln155 contacts (R)-pantoate. ATP is bound by residues Ile178 and 186–189 (MSSR).

It belongs to the pantothenate synthetase family. In terms of assembly, homodimer.

The protein resides in the cytoplasm. It catalyses the reaction (R)-pantoate + beta-alanine + ATP = (R)-pantothenate + AMP + diphosphate + H(+). It functions in the pathway cofactor biosynthesis; (R)-pantothenate biosynthesis; (R)-pantothenate from (R)-pantoate and beta-alanine: step 1/1. Its function is as follows. Catalyzes the condensation of pantoate with beta-alanine in an ATP-dependent reaction via a pantoyl-adenylate intermediate. The chain is Pantothenate synthetase from Shewanella sp. (strain ANA-3).